Consider the following 664-residue polypeptide: MAGLGGEPIPDGEFTAVVYRLIRDARYAEAVQLLGGELQRSPRSRAGLSLLGYCYYRLQEFALAAECYEQLRQLHPELEQYRLYQAQALYKACLYPEATRVSFLLLDNPTYHNRVLRLQAAIKYSEGDLPGARSLVEQLLSEGGEDSGGENELDGQVNLGCLLYKEGHYEAACSKFSAALQASGYRPDLSYNLALAYFSSRQYASALKHIVEIIEHGIRQHPELGVGMTTEGIDVRSVGNTLVLHQTALVEAFNLKAAIEYQLRNYEAAQETLTDMPPRAEEELDPVTLHNQALMNMDARPTEGFEKLQFLLQQIPFPPETFGNLLLLYCKYEYFDLAADVLAENAHLTYKFLTPYLYDFLDAMITCQTAPEEAFVKLDGLAGMLTEQLRRLTKQVQEARHNKDDEAIKKAENEYDDTLEKYIPVLMAQAKIYWNLENYPMVEKIFRKSVEFCNDHDVWKLNVAHVLFMQENKYKEAIGFYEPIVKKHYDNILKVSAIVLANLCVSYIMTSQNEEAEELMRKIEKEEEQLSYDDPDKKIYHFCIVNLVIGTLYCAKGNYDFGISRVIKSLEPYNKKLGTDTWYYAKRCFLSLLENMSKHMIVLRDSVIQECVQFLEHCELYGRNIPAVIEQPLEEERMHTGKNTVTYESRELKALIYEIIDWNM.

TPR repeat units lie at residues Asp11 to Ser44, Arg45 to Leu78, Leu153 to Arg186, Asp188 to Gln220, Leu392 to Ile423, Pro424 to His456, and Val458 to Asn491. A coiled-coil region spans residues Tyr507–Asp534. The stretch at Cys543 to Lys576 is one TPR 8 repeat.

The protein belongs to the TTC30/dfy-1/fleer family.

The protein resides in the cell projection. It localises to the cilium. In terms of biological role, required for polyglutamylation of axonemal tubulin. Plays a role in anterograde intraflagellar transport (IFT), the process by which cilia precursors are transported from the base of the cilium to the site of their incorporation at the tip. This Bos taurus (Bovine) protein is Intraflagellar transport protein 70A (IFT70A).